The chain runs to 272 residues: 3-methyl-2-oxobutanoate hydroxymethyltransferase (272 aa).

Mg(2+) is bound by residues Asp51 and Asp90. 3-methyl-2-oxobutanoate is bound by residues 51–52, Asp90, and Lys118; that span reads DS. Glu120 contributes to the Mg(2+) binding site. Glu187 functions as the Proton acceptor in the catalytic mechanism.

This sequence belongs to the PanB family. In terms of assembly, homodecamer; pentamer of dimers. Mg(2+) is required as a cofactor.

The protein resides in the cytoplasm. The enzyme catalyses 3-methyl-2-oxobutanoate + (6R)-5,10-methylene-5,6,7,8-tetrahydrofolate + H2O = 2-dehydropantoate + (6S)-5,6,7,8-tetrahydrofolate. Its pathway is cofactor biosynthesis; (R)-pantothenate biosynthesis; (R)-pantoate from 3-methyl-2-oxobutanoate: step 1/2. Catalyzes the reversible reaction in which hydroxymethyl group from 5,10-methylenetetrahydrofolate is transferred onto alpha-ketoisovalerate to form ketopantoate. In Xylella fastidiosa (strain 9a5c), this protein is 3-methyl-2-oxobutanoate hydroxymethyltransferase.